The following is a 690-amino-acid chain: Crooked neck-like protein 1 (690 aa).

16 HAT repeats span residues 61 to 93, 95 to 127, 129 to 161, 163 to 194, 196 to 227, 229 to 264, 266 to 300, 310 to 342, 344 to 378, 388 to 424, 459 to 491, 493 to 527, 529 to 560, 565 to 606, 608 to 646, and 648 to 673; these read DYKLRKRKTFEDNIRKNRTVISNWIKYAQWEES, KEIQRARSIYERALDVDYRNITLWLKYAEMEMK, RQVNHARNIWDRAITTLPRVNQFWYKYTYMEEM, GNVAGARQVFERWMEWQPEEQAWHSYINFELR, KEVERARTIYERFVLVHPAVKNWIKYARFEEK, AYFAHARKVYERAVEFFGDEHMDEHLYVAFAKFEEN, KEFERVRVIYKYALDRISKQEAQELFKNYTIFEKK, IIVSKRRFQYEEEVKANPHNYDAWFDYLRLVES, AEADTVREVYERAIANVPPIQEKRHWKRYIYLWVN, KDPERTRQVYQASLELIPHKKFTFAKMWLYYAQFEIR, REFDRCRKLYEKFLEFGPENCTSWIKFAELETI, GDIERARAIYELAISQPRLDMPEVLWKSYIDFEIE, EETERTRNLYRQLLQRTQHVKVWISFAQFELS, GSVA…EFGT, SDKERVDKLMPEKVKKRRKVQADDGSDAGWEEYYDYIFP, and DAANQPNLKLLAMAKLWKKQQQEREA. Residues 250-467 form a mediates interaction with HSP90 region; the sequence is MDEHLYVAFA…LREFDRCRKL (218 aa). Serine 342 carries the post-translational modification Phosphoserine. The Nuclear localization signal motif lies at 618 to 626; sequence PEKVKKRRK. Residues 667 to 679 are compositionally biased toward basic and acidic residues; that stretch reads QQQEREAAEQDPD. Residues 667 to 690 form a disordered region; sequence QQQEREAAEQDPDKDIDESESSSF. Residues 680–690 show a composition bias toward acidic residues; sequence KDIDESESSSF. Phosphoserine is present on serine 689.

The protein belongs to the crooked-neck family. As to quaternary structure, identified in the spliceosome C complex. Present in a spliceosome complex assembled in vitro containing CRNKL1, HPRP8BP and SNRPB2. Component of the minor spliceosome, which splices U12-type introns. Interacts with PPIL2 (via the PPIase cyclophilin-type domain); they may form a trimeric complex with HSP90.

The protein localises to the nucleus. Its subcellular location is the nucleus speckle. In terms of biological role, involved in pre-mRNA splicing process. As a component of the minor spliceosome, involved in the splicing of U12-type introns in pre-mRNAs. In Mus musculus (Mouse), this protein is Crooked neck-like protein 1 (Crnkl1).